The following is a 370-amino-acid chain: MLCPWKCQNAQRGLWNVFKLWVWIMLCCDFFAHHGTDCWTYHYSKRPMPWEKARAFCRENYTDLVAIQNKGEIEYLNKTLPFSRTYYWIGIRKVEGVWTWVGTNKSLTEEAKNWGAGEPNNRKSKEDCVEIYIKRNKDSGKWNDDACHKAKTALCYTASCKPWSCSGHGQCVEVINNYTCNCDLGYYGPECQFVTQCVPLEAPKLGTMACTHPLGNFSFMSQCAFNCSKGTDMIGVEETTCAPFGNWSSPEPTCRVIQCEPLTEPDLGTMDCNHPLVDFGFSSTCTFSCSEEAELTGEKKTICGLSGNWSSPSPRCQKINRTISINEESDYNPLFIPVAVMVTAFSGLAFIIWLARRLKRKSKKVSEKHG.

A signal peptide spans 1–28; the sequence is MLCPWKCQNAQRGLWNVFKLWVWIMLCC. A propeptide spanning residues 29–38 is cleaved from the precursor; that stretch reads DFFAHHGTDC. Residues 39-333 are Extracellular-facing; that stretch reads WTYHYSKRPM…SINEESDYNP (295 aa). Residues 55–155 form the C-type lectin domain; sequence AFCRENYTDL…ACHKAKTALC (101 aa). Intrachain disulfides connect Cys-57/Cys-155, Cys-128/Cys-147, Cys-128/Cys-160, Cys-160/Cys-171, Cys-165/Cys-180, Cys-182/Cys-191, Cys-197/Cys-241, Cys-227/Cys-254, Cys-259/Cys-303, and Cys-289/Cys-316. N-linked (GlcNAc...) asparagine glycans are attached at residues Asn-60, Asn-77, and Asn-104. Ca(2+) contacts are provided by Glu-118, Asn-120, Glu-126, Asn-143, and Asp-144. The EGF-like domain maps to 156–192; the sequence is YTASCKPWSCSGHGQCVEVINNYTCNCDLGYYGPECQ. Residue Asn-177 is glycosylated (N-linked (GlcNAc...) asparagine). Sushi domains are found at residues 195–256 and 257–318; these read TQCV…TCRV and IQCE…RCQK. Asn-216, Asn-226, and Asn-246 each carry an N-linked (GlcNAc...) asparagine glycan. 2 N-linked (GlcNAc...) asparagine glycosylation sites follow: Asn-308 and Asn-320. A helical transmembrane segment spans residues 334–354; sequence LFIPVAVMVTAFSGLAFIIWL. At 355–370 the chain is on the cytoplasmic side; the sequence is ARRLKRKSKKVSEKHG.

Belongs to the selectin/LECAM family. In terms of assembly, interaction with SELPLG/PSGL1 and PODXL2 is required for promoting recruitment and rolling of leukocytes. This interaction is dependent on the sialyl Lewis X glycan modification of SELPLG and PODXL2, and tyrosine sulfation modifications of SELPLG. Sulfation on 'Tyr-51' of SELPLG is important for L-selectin binding. In terms of processing, N-glycosylated. As to expression, highly expressed in lymphocytes from peripheral lymph nodes. Low in lymphocytes isolated from Peyer patches.

It localises to the cell membrane. In terms of biological role, calcium-dependent lectin that mediates cell adhesion by binding to glycoproteins on neighboring cells. Mediates the adherence of lymphocytes to endothelial cells of high endothelial venules in peripheral lymph nodes. Promotes initial tethering and rolling of leukocytes in endothelia. This Bos taurus (Bovine) protein is L-selectin (SELL).